The following is a 244-amino-acid chain: 1-(5-phosphoribosyl)-5-[(5-phosphoribosylamino)methylideneamino] imidazole-4-carboxamide isomerase (244 aa).

Asp10 (proton acceptor) is an active-site residue. The active-site Proton donor is Asp132.

It belongs to the HisA/HisF family.

The protein localises to the cytoplasm. It carries out the reaction 1-(5-phospho-beta-D-ribosyl)-5-[(5-phospho-beta-D-ribosylamino)methylideneamino]imidazole-4-carboxamide = 5-[(5-phospho-1-deoxy-D-ribulos-1-ylimino)methylamino]-1-(5-phospho-beta-D-ribosyl)imidazole-4-carboxamide. The protein operates within amino-acid biosynthesis; L-histidine biosynthesis; L-histidine from 5-phospho-alpha-D-ribose 1-diphosphate: step 4/9. This Xanthomonas axonopodis pv. citri (strain 306) protein is 1-(5-phosphoribosyl)-5-[(5-phosphoribosylamino)methylideneamino] imidazole-4-carboxamide isomerase.